A 150-amino-acid polypeptide reads, in one-letter code: Large ribosomal subunit protein uL15 (150 aa).

The disordered stretch occupies residues 1-52; sequence MDLSNLKPAEGSVRKNSKRIGRGEGSGKGGTATRGHKGAKSRSGYSKKIGFE. A compositionally biased stretch (gly residues) spans 23–32; it reads GEGSGKGGTA.

The protein belongs to the universal ribosomal protein uL15 family. In terms of assembly, part of the 50S ribosomal subunit.

Functionally, binds to the 23S rRNA. This Christiangramia forsetii (strain DSM 17595 / CGMCC 1.15422 / KT0803) (Gramella forsetii) protein is Large ribosomal subunit protein uL15.